The chain runs to 305 residues: UPF0612 protein C337.02c (305 aa).

Coiled coils occupy residues 27–63 (IERY…MKYE) and 120–207 (NDMN…DARS).

Belongs to the UPF0612 family.

This chain is UPF0612 protein C337.02c, found in Schizosaccharomyces pombe (strain 972 / ATCC 24843) (Fission yeast).